We begin with the raw amino-acid sequence, 422 residues long: Phosphoribosylamine--glycine ligase (422 aa).

In terms of domain architecture, ATP-grasp spans 107 to 313; the sequence is KDLMKKYDIP…LVQVLLDLLD (207 aa). 133-194 contributes to the ATP binding site; it reads VQEKGAPIVI…EEYLSGEEFS (62 aa). Mg(2+)-binding residues include glutamate 283 and asparagine 285.

It belongs to the GARS family. The cofactor is Mg(2+). It depends on Mn(2+) as a cofactor.

The enzyme catalyses 5-phospho-beta-D-ribosylamine + glycine + ATP = N(1)-(5-phospho-beta-D-ribosyl)glycinamide + ADP + phosphate + H(+). The protein operates within purine metabolism; IMP biosynthesis via de novo pathway; N(1)-(5-phospho-D-ribosyl)glycinamide from 5-phospho-alpha-D-ribose 1-diphosphate: step 2/2. In Bacillus subtilis (strain 168), this protein is Phosphoribosylamine--glycine ligase.